Here is a 28-residue protein sequence, read N- to C-terminus: Putative GDSL-motif lipase/hydrolase-like protein (28 aa).

It belongs to the 'GDSL' lipolytic enzyme family.

This is Putative GDSL-motif lipase/hydrolase-like protein from Populus euphratica (Euphrates poplar).